Consider the following 355-residue polypeptide: Protein ATP1B4 (355 aa).

The Nuclear segment spans residues 1-108 (MRRQLRSRRA…SLARTGQSLS (108 aa)). The tract at residues 35–76 (EEEEAEEARVMVVPDLEEEEKEEEEEKEEDEKEEEESHHQDT) is disordered. Residues 49-68 (DLEEEEKEEEEEKEEDEKEE) are compositionally biased toward acidic residues. The chain crosses the membrane as a helical; Signal-anchor for type II membrane protein span at residues 109-129 (LLLVIYFFFYASLAAVITLCM). Over 130 to 355 (YTLFLTISPY…RVIFTLNIET (226 aa)) the chain is Perinuclear space.

It belongs to the X(+)/potassium ATPases subunit beta family. Associates with a SMAD7-transcriptional complex. Interacts with SNW1 and TOR1AIP1. Does not associate with known Na,K-ATPase alpha-subunits. Expressed in skeletal muscle (at protein level). Expressed during postnatal development in skeletal muscle and heart.

Its subcellular location is the nucleus inner membrane. Functionally, may act as a transcriptional coregulator during muscle development through its interaction with SNW1. Has lost its ancestral function as a Na,K-ATPase beta-subunit. This is Protein ATP1B4 (ATP1B4) from Sus scrofa (Pig).